The sequence spans 148 residues: Large ribosomal subunit protein uL11 (148 aa).

The tract at residues 89 to 108 is disordered; the sequence is EKKKGSGAHKPGKEKVGQVT.

This sequence belongs to the universal ribosomal protein uL11 family. As to quaternary structure, part of the ribosomal stalk of the 50S ribosomal subunit. Interacts with L10 and the large rRNA to form the base of the stalk. L10 forms an elongated spine to which L12 dimers bind in a sequential fashion forming a multimeric L10(L12)X complex. Post-translationally, one or more lysine residues are methylated.

Its function is as follows. Forms part of the ribosomal stalk which helps the ribosome interact with GTP-bound translation factors. The chain is Large ribosomal subunit protein uL11 from Anaeromyxobacter dehalogenans (strain 2CP-1 / ATCC BAA-258).